The primary structure comprises 92 residues: MSRTVFCHYQQSDAEGLDFVPYPGELGQRIFAHIGKTAWQAWLAHQTMLINENRLSPRDPKHRAFLETELQKFLFERNADKPDGYVAPLGEE.

It belongs to the Fe(2+)-trafficking protein family.

In terms of biological role, could be a mediator in iron transactions between iron acquisition and iron-requiring processes, such as synthesis and/or repair of Fe-S clusters in biosynthetic enzymes. This chain is Probable Fe(2+)-trafficking protein, found in Xanthomonas oryzae pv. oryzae (strain MAFF 311018).